The primary structure comprises 56 residues: Lantibiotic subtilin (56 aa).

Positions 1–24 (MSKFDDFDLDVVKVSKQDSKITPQ) are excised as a propeptide. An N2-succinyltryptophan; partial modification is found at Trp-25. Positions 27–31 (SESLC) form a cross-link, lanthionine (Ser-Cys). The residue at position 29 (Ser-29) is a 2,3-didehydroalanine (Ser). 4 cross-links (beta-methyllanthionine (Thr-Cys)) span residues 32 to 35 (TPGC), 37 to 43 (TGALQTC), 47 to 50 (TLTC), and 49 to 52 (TCNC). The residue at position 42 (Thr-42) is a (Z)-2,3-didehydrobutyrine. A 2,3-didehydroalanine (Ser) modification is found at Ser-55.

This sequence belongs to the type A lantibiotic family. Post-translationally, maturation of lantibiotics involves the enzymatic conversion of Thr, and Ser into dehydrated AA and the formation of thioether bonds with cysteine. This is followed by membrane translocation and cleavage of the modified precursor. In terms of processing, succinylated subtilin is 10-20 times less active than subtilin. The ratio subtilin/succinylated subtilin is about 1:2 after 24 hours growth. The 2,3-didehydrobutyrine is determined to be the Z-isomer.

Lanthionine-containing peptide antibiotic (lantibiotic) active on Gram-positive bacteria. The bactericidal activity of lantibiotics is based on depolarization of energized bacterial cytoplasmic membranes, initiated by the formation of aqueous transmembrane pores. This chain is Lantibiotic subtilin (spaS), found in Bacillus subtilis.